We begin with the raw amino-acid sequence, 37 residues long: MKVQPSVKRICRNCKVIRRKGVVRIICKDPRHKQRQG.

It belongs to the bacterial ribosomal protein bL36 family.

The chain is Large ribosomal subunit protein bL36 from Dechloromonas aromatica (strain RCB).